The following is a 317-amino-acid chain: Acetyl-coenzyme A carboxylase carboxyl transferase subunit alpha (317 aa).

A CoA carboxyltransferase C-terminal domain is found at 40–293 (LEGRVRDAMV…ETVIGDALKE (254 aa)).

Belongs to the AccA family. As to quaternary structure, acetyl-CoA carboxylase is a heterohexamer composed of biotin carboxyl carrier protein (AccB), biotin carboxylase (AccC) and two subunits each of ACCase subunit alpha (AccA) and ACCase subunit beta (AccD).

The protein resides in the cytoplasm. The enzyme catalyses N(6)-carboxybiotinyl-L-lysyl-[protein] + acetyl-CoA = N(6)-biotinyl-L-lysyl-[protein] + malonyl-CoA. It participates in lipid metabolism; malonyl-CoA biosynthesis; malonyl-CoA from acetyl-CoA: step 1/1. Component of the acetyl coenzyme A carboxylase (ACC) complex. First, biotin carboxylase catalyzes the carboxylation of biotin on its carrier protein (BCCP) and then the CO(2) group is transferred by the carboxyltransferase to acetyl-CoA to form malonyl-CoA. The protein is Acetyl-coenzyme A carboxylase carboxyl transferase subunit alpha of Rhizobium meliloti (strain 1021) (Ensifer meliloti).